We begin with the raw amino-acid sequence, 541 residues long: MLSPQRTAAVASRGAGDAMENGKPGPVQVVLVHKEQHSFELEERALASVLLQDHIRDLDVVVVSVAGAFRKGKSFILDFMLRYLYSQKEGGHSDWLGDPEEPLTGFSWRGGSDPETTGIQIWSEVFTVKKPCGKKVAVVLMDTQGAFDSQSTVKDCATIFALSTMTSSVQIYNLSQNIQEDDLQQLQLFTEYGRLAMDEIFQKPFQTLMFLIRDWSFPYEYNYGLQGGMAFLDKRLHVKEHQHEEIQNVRNHIHSCFSDVTCFLLPHPGLQVATSPNFDGKLKDIASEFKEQLQALIPYVLNPSKLMEKEINGSKVTCRGLLEYFKAYIKIYQGEDLPHPKSMLQATAEANNLAAAASAKDIYYNNMEEICGGEKPYLSPDILEEKHLEFKQLALDHFKKIKKMGGKDFSFRYQQELEEEIKELYENFCKHNGSKNVFSTFRTPAVLFTGIAALYIASGFTGFIGLEVVAQLFNCMVGLLLIALLTWGYIRYSGQYRELGGAIDSGAAYVLEQASSHIGNSTQAAVRDAVVGRPPADKKSQ.

Residues 1–22 (MLSPQRTAAVASRGAGDAMENG) form a disordered region. Positions 1 to 25 (MLSPQRTAAVASRGAGDAMENGKPG) are N-terminal hypervariable region (HVR). The Cytoplasmic portion of the chain corresponds to 1 to 445 (MLSPQRTAAV…NVFSTFRTPA (445 aa)). The GB1/RHD3-type G domain maps to 57–305 (DLDVVVVSVA…LIPYVLNPSK (249 aa)). Residues Arg-70, Lys-71, Gly-72, Lys-73, Ser-74, Phe-75, and Arg-109 each contribute to the GDP site. Mg(2+) is bound at residue Asp-142. Residues Arg-213, Asp-214, Val-272, and Ser-275 each contribute to the GDP site. Positions 343–434 (MLQATAEANN…YENFCKHNGS (92 aa)) are 3HB (three-helix bundle) domain. Lys-391 carries the N6-acetyllysine modification. The helical transmembrane segment at 446-466 (VLFTGIAALYIASGFTGFIGL) threads the bilayer. Residue Glu-467 is a topological domain, lumenal. The helical transmembrane segment at 468–488 (VVAQLFNCMVGLLLIALLTWG) threads the bilayer. Residues 489-541 (YIRYSGQYRELGGAIDSGAAYVLEQASSHIGNSTQAAVRDAVVGRPPADKKSQ) lie on the Cytoplasmic side of the membrane.

This sequence belongs to the TRAFAC class dynamin-like GTPase superfamily. GB1/RHD3 GTPase family. GB1 subfamily. Monomeric and homodimeric. The homodimer, transiently formed by two molecules on opposing membranes, is the active form mediating ER membrane fusion. Interacts with ZFYVE27; both proteins are involved in endoplasmic reticulum tubular network organization. Interacts with REEP5; both proteins are involved in endoplasmic reticulum tubular network organization. As to expression, expressed in cardiomyocytes (at protein level).

It localises to the endoplasmic reticulum membrane. It carries out the reaction GTP + H2O = GDP + phosphate + H(+). Its function is as follows. Atlastin-3 (ATL3) is a membrane-anchored GTPase that mediates the GTP-dependent fusion of endoplasmic reticulum (ER) membranes, maintaining the continuous ER network. It facilitates the formation of three-way junctions where ER tubules intersect. Two atlastin-3 on neighboring ER tubules bind GTP and form loose homodimers through the GB1/RHD3-type G domains and 3HB regions. Upon GTP hydrolysis, the 3HB regions tighten, pulling the membranes together to drive their fusion. After fusion, the homodimer disassembles upon release of inorganic phosphate (Pi). Subsequently, GDP dissociates, resetting the monomers to a conformation ready for a new fusion cycle. The protein is Atlastin-3 of Mus musculus (Mouse).